A 350-amino-acid polypeptide reads, in one-letter code: S-adenosylmethionine:tRNA ribosyltransferase-isomerase (350 aa).

It belongs to the QueA family. Monomer.

It is found in the cytoplasm. It carries out the reaction 7-aminomethyl-7-carbaguanosine(34) in tRNA + S-adenosyl-L-methionine = epoxyqueuosine(34) in tRNA + adenine + L-methionine + 2 H(+). The protein operates within tRNA modification; tRNA-queuosine biosynthesis. In terms of biological role, transfers and isomerizes the ribose moiety from AdoMet to the 7-aminomethyl group of 7-deazaguanine (preQ1-tRNA) to give epoxyqueuosine (oQ-tRNA). This Bacillus cereus (strain Q1) protein is S-adenosylmethionine:tRNA ribosyltransferase-isomerase.